The following is a 560-amino-acid chain: Arginine--tRNA ligase (560 aa).

The 'HIGH' region signature appears at 135–145; that stretch reads ANPTGLLHMGN.

This sequence belongs to the class-I aminoacyl-tRNA synthetase family. As to quaternary structure, monomer.

It localises to the cytoplasm. It carries out the reaction tRNA(Arg) + L-arginine + ATP = L-arginyl-tRNA(Arg) + AMP + diphosphate. The chain is Arginine--tRNA ligase from Moorella thermoacetica (strain ATCC 39073 / JCM 9320).